Consider the following 697-residue polypeptide: MANALRRFTEYAPANPDLMVALMLLLAVSMMVMPIPVMAVDALIGFNMGLAVLLLMAALYVSTPLDFSSLPGVILLSTVFRLALTVATTRLILAEGEAGSIIHTFGSFVISGNIVVGFVIFLVVTMVQFMVLAKGAERVAEVAARFTLDALPGKQMAIDAELRNGHIDADESRRRRAALEKESKLYGAMDGAMKFVKGDSIAGLVVICINMLGGISIGLLSKGMSFAQVLHHYTLLTIGDALISQIPALLLSITAATMVTRVTGASKLNLGEDIANQLTASTRALRLAACVLVAMGFVPGFPLPVFFMLAAVFAAASFVKGDVLDADKVDATTVTPAESQTPNVAAQPNPIGVFLAPSLTNAIDQVELRQHIARISQLVSADLGIIVPPIPVDVDQQLPESQFRIDVEGVPVEQDLINPAQLSLADDLKKIESSGIPFRHDPETHRIWVEQSHEPALKAAGIRHHSPSELLAMRVHATLTCHAPRLVGIQETRQLLGRMEQEYSDLVKEVLRTTPIPRIADVLRRLLGEGIPIRNTRLVLEALAEWSEREQNVALLTEHVRSGMKRQICHRYGRHGVLPAFVMERETEDVVRCAVRETAAGPYLALEDRQSEALLSQMRQVFSSTAPGQTRPIVLTSMDVRRFVRGFLTRNGIELAVLSYQDLASDFKIQPVGSIRLPPSNGTSGEPRSIRPSATTG.

8 consecutive transmembrane segments (helical) span residues 20–40, 42–62, 67–87, 107–127, 200–220, 235–255, 293–313, and 372–392; these read VALM…VMAV, ALIG…LYVS, FSSL…LTVA, SFVI…VTMV, SIAG…IGLL, LLTI…SITA, VAMG…AAVF, and IARI…PIPV. The disordered stretch occupies residues 675–697; that stretch reads IRLPPSNGTSGEPRSIRPSATTG. The segment covering 680–697 has biased composition (polar residues); sequence SNGTSGEPRSIRPSATTG.

The protein belongs to the FHIPEP (flagella/HR/invasion proteins export pore) family.

The protein resides in the cell inner membrane. Its function is as follows. Could be involved in the secretion of an unknown factor. The sequence is that of Probable translocation protein y4yR from Sinorhizobium fredii (strain NBRC 101917 / NGR234).